The primary structure comprises 232 residues: Ribose-5-phosphate isomerase A (232 aa).

Substrate is bound by residues 28–31 (TGST), 83–86 (DGAD), and 96–99 (KGGG). The active-site Proton acceptor is the glutamate 105. Lysine 123 contacts substrate.

Belongs to the ribose 5-phosphate isomerase family. In terms of assembly, homodimer.

The enzyme catalyses aldehydo-D-ribose 5-phosphate = D-ribulose 5-phosphate. Its pathway is carbohydrate degradation; pentose phosphate pathway; D-ribose 5-phosphate from D-ribulose 5-phosphate (non-oxidative stage): step 1/1. Catalyzes the reversible conversion of ribose-5-phosphate to ribulose 5-phosphate. The protein is Ribose-5-phosphate isomerase A of Rhizobium etli (strain ATCC 51251 / DSM 11541 / JCM 21823 / NBRC 15573 / CFN 42).